The sequence spans 155 residues: Deoxyuridine 5'-triphosphate nucleotidohydrolase (155 aa).

Residues 74 to 76, asparagine 87, and 91 to 93 contribute to the substrate site; these read RSG and LID.

This sequence belongs to the dUTPase family. Mg(2+) serves as cofactor.

The enzyme catalyses dUTP + H2O = dUMP + diphosphate + H(+). It functions in the pathway pyrimidine metabolism; dUMP biosynthesis; dUMP from dCTP (dUTP route): step 2/2. Functionally, this enzyme is involved in nucleotide metabolism: it produces dUMP, the immediate precursor of thymidine nucleotides and it decreases the intracellular concentration of dUTP so that uracil cannot be incorporated into DNA. In Xylella fastidiosa (strain M23), this protein is Deoxyuridine 5'-triphosphate nucleotidohydrolase.